The following is a 122-amino-acid chain: NADPH-dependent 7-cyano-7-deazaguanine reductase (122 aa).

The active-site Thioimide intermediate is the C34. D41 serves as the catalytic Proton donor. Substrate is bound by residues V56–L58 and H75–E76.

It belongs to the GTP cyclohydrolase I family. QueF type 1 subfamily.

The protein resides in the cytoplasm. It carries out the reaction 7-aminomethyl-7-carbaguanine + 2 NADP(+) = 7-cyano-7-deazaguanine + 2 NADPH + 3 H(+). The protein operates within tRNA modification; tRNA-queuosine biosynthesis. In terms of biological role, catalyzes the NADPH-dependent reduction of 7-cyano-7-deazaguanine (preQ0) to 7-aminomethyl-7-deazaguanine (preQ1). The protein is NADPH-dependent 7-cyano-7-deazaguanine reductase of Anaeromyxobacter sp. (strain Fw109-5).